The sequence spans 235 residues: Thaumatin I (235 aa).

Residues methionine 1–alanine 22 form the signal peptide. Intrachain disulfides connect cysteine 31–cysteine 226, cysteine 78–cysteine 88, cysteine 93–cysteine 99, cysteine 143–cysteine 215, cysteine 148–cysteine 199, cysteine 156–cysteine 167, cysteine 171–cysteine 180, and cysteine 181–cysteine 186. The propeptide at leucine 230–glutamate 235 is removed in mature form.

This sequence belongs to the thaumatin family.

The protein localises to the cytoplasmic vesicle. Functionally, taste-modifying protein; intensely sweet-tasting. It is 100000 times sweeter than sucrose on a molar basis. The polypeptide is Thaumatin I (Thaumatococcus daniellii (Katemfe)).